The chain runs to 87 residues: Toxin Cll4 (87 aa).

Residues Met1 to Ala19 form the signal peptide. The 66-residue stretch at Lys20 to Asn85 folds into the LCN-type CS-alpha/beta domain. 4 cysteine pairs are disulfide-bonded: Cys31–Cys84, Cys35–Cys60, Cys44–Cys65, and Cys48–Cys67. Residue Asn85 is modified to Asparagine amide.

It belongs to the long (4 C-C) scorpion toxin superfamily. Sodium channel inhibitor family. Beta subfamily. As to expression, expressed by the venom gland.

Its subcellular location is the secreted. Functionally, beta toxins bind voltage-independently at site-4 of sodium channels (Nav) and shift the voltage of activation toward more negative potentials thereby affecting sodium channel activation and promoting spontaneous and repetitive firing. This chain is Toxin Cll4, found in Centruroides limpidus (Mexican scorpion).